Consider the following 196-residue polypeptide: Probable GTP-binding protein EngB (196 aa).

The 175-residue stretch at 21–195 (DVSEICLIGR…YELIDKLLGS (175 aa)) folds into the EngB-type G domain. GTP is bound by residues 29 to 36 (GRSNVGKS), 56 to 60 (GKTRL), 75 to 78 (DAPG), 142 to 145 (TKLD), and 174 to 176 (ISN). Residues Ser-36 and Thr-58 each coordinate Mg(2+).

This sequence belongs to the TRAFAC class TrmE-Era-EngA-EngB-Septin-like GTPase superfamily. EngB GTPase family. Requires Mg(2+) as cofactor.

Necessary for normal cell division and for the maintenance of normal septation. In Mycoplasma mycoides subsp. mycoides SC (strain CCUG 32753 / NCTC 10114 / PG1), this protein is Probable GTP-binding protein EngB.